Consider the following 127-residue polypeptide: Small ribosomal subunit protein uS11 (127 aa).

Belongs to the universal ribosomal protein uS11 family. As to quaternary structure, part of the 30S ribosomal subunit.

Its function is as follows. Located on the platform of the 30S subunit. The sequence is that of Small ribosomal subunit protein uS11 from Natronomonas pharaonis (strain ATCC 35678 / DSM 2160 / CIP 103997 / JCM 8858 / NBRC 14720 / NCIMB 2260 / Gabara) (Halobacterium pharaonis).